The primary structure comprises 69 residues: uncharacterized protein (69 aa).

The signal sequence occupies residues 1–16 (MSLGLIFALLLTHAAA).

This is an uncharacterized protein from Archaeoglobus fulgidus (strain ATCC 49558 / DSM 4304 / JCM 9628 / NBRC 100126 / VC-16).